The following is a 352-amino-acid chain: Glucose 1-dehydrogenase 1 (352 aa).

Cys35 is a binding site for Zn(2+). Substrate is bound at residue Thr37. Zn(2+) is bound by residues His60 and Glu61. Asn83 lines the substrate pocket. Zn(2+)-binding residues include Cys87, Cys90, Cys93, and Cys101. Residues Glu108, Gln144, and Asp148 each contribute to the substrate site. A Zn(2+)-binding site is contributed by Gln144. NADP(+) is bound by residues 182-185 (TGTI), 204-206 (NKR), 264-266 (FGF), 292-294 (LIN), and Lys341. Asn294 is a substrate binding site.

Belongs to the zinc-containing alcohol dehydrogenase family. Glucose 1-dehydrogenase subfamily. It depends on Zn(2+) as a cofactor.

The enzyme catalyses D-glucose + NAD(+) = D-glucono-1,5-lactone + NADH + H(+). It carries out the reaction D-glucose + NADP(+) = D-glucono-1,5-lactone + NADPH + H(+). Catalyzes the NAD(P)(+)-dependent oxidation of D-glucose to D-gluconate via gluconolactone. Can utilize both NAD(+) and NADP(+) as electron acceptor. Is involved in the degradation of glucose through a non-phosphorylative variant of the Entner-Doudoroff pathway. The chain is Glucose 1-dehydrogenase 1 from Picrophilus torridus (strain ATCC 700027 / DSM 9790 / JCM 10055 / NBRC 100828 / KAW 2/3).